The chain runs to 523 residues: NAD(P)H-quinone oxidoreductase subunit 2 (523 aa).

14 helical membrane passes run 29 to 49 (AIAP…VDLA), 57 to 77 (WVPP…AQQW), 94 to 114 (LAIS…LISW), 123 to 143 (PIGE…LLCG), 147 to 167 (LVSV…LAGY), 182 to 202 (LLVG…LYGL), 223 to 243 (AALS…AVPF), 255 to 275 (PTPV…ALAL), 291 to 311 (LLFT…ALAQ), 317 to 337 (MLAY…VCGT), 345 to 365 (VLYM…IILF), 389 to 409 (LGLS…GFFG), 424 to 444 (LLVV…ISVI), and 477 to 497 (IALV…NPLF).

It belongs to the complex I subunit 2 family. As to quaternary structure, NDH-1 can be composed of about 15 different subunits; different subcomplexes with different compositions have been identified which probably have different functions.

The protein localises to the cellular thylakoid membrane. The catalysed reaction is a plastoquinone + NADH + (n+1) H(+)(in) = a plastoquinol + NAD(+) + n H(+)(out). It carries out the reaction a plastoquinone + NADPH + (n+1) H(+)(in) = a plastoquinol + NADP(+) + n H(+)(out). Its function is as follows. NDH-1 shuttles electrons from an unknown electron donor, via FMN and iron-sulfur (Fe-S) centers, to quinones in the respiratory and/or the photosynthetic chain. The immediate electron acceptor for the enzyme in this species is believed to be plastoquinone. Couples the redox reaction to proton translocation, and thus conserves the redox energy in a proton gradient. Cyanobacterial NDH-1 also plays a role in inorganic carbon-concentration. This chain is NAD(P)H-quinone oxidoreductase subunit 2, found in Prochlorococcus marinus (strain MIT 9313).